A 442-amino-acid chain; its full sequence is Ribosomal protein uS12 methylthiotransferase RimO (442 aa).

An MTTase N-terminal domain is found at 8–118 (PKVGFVSLGC…VLGHVHKYVE (111 aa)). Residues Cys-17, Cys-53, Cys-82, Cys-150, Cys-154, and Cys-157 each contribute to the [4Fe-4S] cluster site. The Radical SAM core domain occupies 136 to 373 (LTPRHYAYLK…MELQQQVSIR (238 aa)). In terms of domain architecture, TRAM spans 376–442 (ARKVGKEMLV…EYDLWASLID (67 aa)).

Belongs to the methylthiotransferase family. RimO subfamily. The cofactor is [4Fe-4S] cluster.

The protein localises to the cytoplasm. The enzyme catalyses L-aspartate(89)-[ribosomal protein uS12]-hydrogen + (sulfur carrier)-SH + AH2 + 2 S-adenosyl-L-methionine = 3-methylsulfanyl-L-aspartate(89)-[ribosomal protein uS12]-hydrogen + (sulfur carrier)-H + 5'-deoxyadenosine + L-methionine + A + S-adenosyl-L-homocysteine + 2 H(+). Catalyzes the methylthiolation of an aspartic acid residue of ribosomal protein uS12. This is Ribosomal protein uS12 methylthiotransferase RimO from Aeromonas hydrophila subsp. hydrophila (strain ATCC 7966 / DSM 30187 / BCRC 13018 / CCUG 14551 / JCM 1027 / KCTC 2358 / NCIMB 9240 / NCTC 8049).